The following is a 233-amino-acid chain: Protein Mis18-alpha (233 aa).

3 positions are modified to phosphoserine: Ser-36, Ser-39, and Ser-40. The Mis18 domain occupies 80 to 178 (PLVFLCSGCR…SVEAIESYVL (99 aa)). 4 residues coordinate Zn(2+): Cys-85, Cys-88, Cys-141, and Cys-144. Lys-162 is covalently cross-linked (Glycyl lysine isopeptide (Lys-Gly) (interchain with G-Cter in SUMO2)). Ser-233 is subject to Phosphoserine.

Belongs to the mis18 family. In terms of assembly, homodimer, and heterodimer with OIP5/MIS18B. Identified in a complex containing MIS18A, OIP5/MIS18B, MIS18BP1, RBBP7 and RBBP4. As to expression, detected in testis.

It localises to the nucleus. The protein resides in the chromosome. The protein localises to the centromere. Its function is as follows. Required for recruitment of CENPA to centromeres and normal chromosome segregation during mitosis. This Homo sapiens (Human) protein is Protein Mis18-alpha (MIS18A).